The primary structure comprises 348 residues: D-erythrose-4-phosphate dehydrogenase (348 aa).

Residues 12 to 13 (RI) and Arg81 each bind NAD(+). Residues 154 to 156 (SCT), Arg200, 213 to 214 (TK), and Arg236 each bind substrate. The Nucleophile role is filled by Cys155. Position 318 (Asn318) interacts with NAD(+).

The protein belongs to the glyceraldehyde-3-phosphate dehydrogenase family. Epd subfamily. As to quaternary structure, homotetramer.

Its subcellular location is the cytoplasm. The enzyme catalyses D-erythrose 4-phosphate + NAD(+) + H2O = 4-phospho-D-erythronate + NADH + 2 H(+). Its pathway is cofactor biosynthesis; pyridoxine 5'-phosphate biosynthesis; pyridoxine 5'-phosphate from D-erythrose 4-phosphate: step 1/5. Catalyzes the NAD-dependent conversion of D-erythrose 4-phosphate to 4-phosphoerythronate. In Salmonella schwarzengrund (strain CVM19633), this protein is D-erythrose-4-phosphate dehydrogenase.